Reading from the N-terminus, the 206-residue chain is Ephrin-A4 (206 aa).

A signal peptide spans 1–25; the sequence is MRLLPLLRTVLWAALLGSRLPGCSS. The 133-residue stretch at 26–158 folds into the Ephrin RBD domain; sequence LRHPIYWNSS…RLQVSVCCKE (133 aa). N-linked (GlcNAc...) asparagine glycosylation occurs at N33. Positions 41 to 43 match the Cell attachment site motif; that stretch reads RGD. 2 cysteine pairs are disulfide-bonded: C58–C99 and C86–C147. Residue N98 is glycosylated (N-linked (GlcNAc...) asparagine). The disordered stretch occupies residues 161 to 180; sequence SSHESAHPVGSPGESGTSGW. A lipid anchor (GPI-anchor amidated serine) is attached at S175. The propeptide at 176–206 is removed in mature form; it reads GTSGWRGGHAPSPLCLLLLLLLPILRLLRVL.

This sequence belongs to the ephrin family. In terms of tissue distribution, expressed in myogenic progenitor cells.

It localises to the cell membrane. Cell surface GPI-bound ligand for Eph receptors, a family of receptor tyrosine kinases which are crucial for migration, repulsion and adhesion during neuronal, vascular and epithelial development. Binds promiscuously Eph receptors residing on adjacent cells, leading to contact-dependent bidirectional signaling into neighboring cells. May play a role in the interaction between activated B-lymphocytes and dendritic cells in tonsils. The chain is Ephrin-A4 (Efna4) from Mus musculus (Mouse).